Consider the following 297-residue polypeptide: MASSTGHLIGGFAGGLSSAVALQPLDLLKTRFQQTKGGTLWQTVKSLDTPWQLWRGTLPSAIRTSVGSALYLSSLNLMRTALAKRKQFDTADSVVTGKSSNLPQLSMYENLVTGAFARGTVGYITMPITIIKVRYESTLYNYKSIAEAAKSIAAQEGIRGFFRGFGPTCLRDAPYSGLYVLLYEKLKHTLPTILPKSLLQLDSEGRYTAYTSTAINSTSAILSASMATTVTAPFDTIKTRMQLEPTKFKTFWSTLTTIVTQEHPIKIFSGLSMRLTRKALSAGIAWGIYEELIKHFM.

3 Solcar repeats span residues 5 to 81 (TGHL…MRTA), 105 to 189 (LSMY…LKHT), and 211 to 295 (TSTA…LIKH). The next 6 membrane-spanning stretches (helical) occupy residues 8–33 (LIGGFAGGLSSAVALQPLDLLKTRFQ), 56–82 (GTLPSAIRTSVGSALYLSSLNLMRTAL), 111–136 (LVTGAFARGTVGYITMPITIIKVRYE), 164–187 (GFGPTCLRDAPYSGLYVLLYEKLK), 215–241 (INSTSAILSASMATTVTAPFDTIKTRM), and 270–288 (GLSMRLTRKALSAGIAWGI).

The protein belongs to the mitochondrial carrier (TC 2.A.29) family. SLC25A38 subfamily.

Its subcellular location is the mitochondrion inner membrane. It carries out the reaction glycine(in) = glycine(out). In terms of biological role, mitochondrial glycine transporter that imports glycine into the mitochondrial matrix. Plays an important role in providing glycine for the first enzymatic step in heme biosynthesis, the condensation of glycine with succinyl-CoA to produce 5-aminolevulinate (ALA) in the mitochondrial matrix. The chain is Mitochondrial glycine transporter from Candida glabrata (strain ATCC 2001 / BCRC 20586 / JCM 3761 / NBRC 0622 / NRRL Y-65 / CBS 138) (Yeast).